Here is a 785-residue protein sequence, read N- to C-terminus: Uncoating factor OPG117 (785 aa).

The protein belongs to the orthopoxvirus OPG117 family. As to quaternary structure, homomultimer; hexamer. Interacts with OPG148.

The protein localises to the host cytoplasm. Its function is as follows. Multifunctional protein required for genome uncoating and replication. Major viral uncoating protein that is required for the release of the viral genome from incoming viral cores containing the viral DNA genome. Possesses an ATPase activity that is required for hexamerization and uncoating. This chain is Uncoating factor OPG117 (OPG117), found in Cynomys gunnisoni (Gunnison's prairie dog).